The chain runs to 300 residues: Metal tolerance protein 12 (300 aa).

The Cytoplasmic portion of the chain corresponds to 1-26 (MESPESFSTMFMKPIRHILSEKKSRK). Residues 27–47 (IALFLLINTAYMVVEFVAGFM) traverse the membrane as a helical segment. Over 48-50 (SNS) the chain is Vacuolar. A helical membrane pass occupies residues 51-71 (LGLISDACHMLFDCAALAIGL). Residues 72–91 (YASYISRLPANHQYNYGRGR) lie on the Cytoplasmic side of the membrane. The chain crosses the membrane as a helical span at residues 92-112 (FEVLSGYVNAVFLVLVGALIV). The Vacuolar segment spans residues 113–128 (LESIERILDPQEISTN). Residues 129 to 149 (SLLVVSVGGLLVNIVGLIFFH) traverse the membrane as a helical segment. The Cytoplasmic portion of the chain corresponds to 150–160 (EEHHHAHGGSG). Residues 161-181 (IFLHVLADTMGSVGVVISTLL) traverse the membrane as a helical segment. Residues 182 to 186 (IKYKG) lie on the Vacuolar side of the membrane. Residues 187–207 (WLVADPASSIFISILIIASVI) traverse the membrane as a helical segment. The Cytoplasmic portion of the chain corresponds to 208-300 (PLLRNSAEIL…WTLQVESVNS (93 aa)).

It belongs to the cation diffusion facilitator (CDF) transporter (TC 2.A.4) family. SLC30A subfamily.

It is found in the vacuole membrane. In terms of biological role, involved in sequestration of excess metal in the cytoplasm into vacuoles to maintain metal homeostasis. This is Metal tolerance protein 12 (MTP12) from Arabidopsis thaliana (Mouse-ear cress).